The following is a 176-amino-acid chain: N,N-dimethyl phenylurea N-demethylase subunit beta (176 aa).

This sequence belongs to the bacterial ring-hydroxylating dioxygenase beta subunit family. In terms of assembly, pdmA (subunit alpha) and PdmB (subunit beta) form the oxygenase component of a bacterial Rieske non-heme iron oxygenase (RO) system.

It carries out the reaction a 1,1-dimethyl-3-phenylurea + 2 reduced [2Fe-2S]-[ferredoxin] + O2 + 2 H(+) = a 1-methyl-3-phenylurea + formaldehyde + 2 oxidized [2Fe-2S]-[ferredoxin] + H2O. The enzyme catalyses isoproturon + 2 reduced [2Fe-2S]-[ferredoxin] + O2 + 2 H(+) = 1-methyl-3-[4-(propan-2-yl)phenyl]urea + formaldehyde + 2 oxidized [2Fe-2S]-[ferredoxin] + H2O. The catalysed reaction is chlorotoluron + 2 reduced [2Fe-2S]-[ferredoxin] + O2 + 2 H(+) = 3-(3-chloro-4-methylphenyl)-1-methylurea + formaldehyde + 2 oxidized [2Fe-2S]-[ferredoxin] + H2O. It catalyses the reaction metoxuron + 2 reduced [2Fe-2S]-[ferredoxin] + O2 + 2 H(+) = 3-(3-chloro-4-methoxylphenyl)-1-methylurea + formaldehyde + 2 oxidized [2Fe-2S]-[ferredoxin] + H2O. It carries out the reaction monuron + 2 reduced [2Fe-2S]-[ferredoxin] + O2 + 2 H(+) = 3-(4-chlorophenyl)-1-methylurea + formaldehyde + 2 oxidized [2Fe-2S]-[ferredoxin] + H2O. The enzyme catalyses diuron + 2 reduced [2Fe-2S]-[ferredoxin] + O2 + 2 H(+) = 3-(3,4-dichlorophenyl)-1-methylurea + formaldehyde + 2 oxidized [2Fe-2S]-[ferredoxin] + H2O. The catalysed reaction is fluometuron + 2 reduced [2Fe-2S]-[ferredoxin] + O2 + 2 H(+) = 3-[3-(trifluoromethyl)phenyl]-1-methylurea + formaldehyde + 2 oxidized [2Fe-2S]-[ferredoxin] + H2O. It catalyses the reaction fenuron + 2 reduced [2Fe-2S]-[ferredoxin] + O2 + 2 H(+) = 1-methyl-3-phenylurea + formaldehyde + 2 oxidized [2Fe-2S]-[ferredoxin] + H2O. Its pathway is xenobiotic degradation. Activity is stimulated in vitro by coexpression of a [3Fe-4S]-type ferredoxin. Part of the multicomponent N,N-dimethyl phenylurea N-demethylase responsible for the initial N-demethylation step during the bacterial metabolism of N,N-dimethyl-substituted phenylurea herbicides. Catalyzes the mono-N-demethylation of N,N-dimethyl-substituted phenylurea herbicides to their mono-N-demethylated derivatives. Is active on isoproturon (IPU), chlorotoluron, metoxuron, monoron, diuron, fluometuron and fenuron, but cannot transform the N-methoxy-N-methyl-substituted herbicides. This Sphingobium sp. (strain YBL2) protein is N,N-dimethyl phenylurea N-demethylase subunit beta.